The sequence spans 299 residues: Putative syntaxin-2 (299 aa).

Residues 1 to 270 are Cytoplasmic-facing; that stretch reads MRDRLNEFQS…SAMRKKICVA (270 aa). Residues 112–146 are a coiled coil; the sequence is EKRMRQNQLELLKDNLNKLINLFNETHQDYKSRVS. A t-SNARE coiled-coil homology domain is found at 193–255; sequence YEDVKKRHGE…KQGSANVKTA (63 aa). The helical; Anchor for type IV membrane protein transmembrane segment at 271–291 threads the bilayer; that stretch reads AILITILLILIIVAIILAVVL. Over 292–299 the chain is Extracellular; that stretch reads SRGNNNNK.

This sequence belongs to the syntaxin family.

It localises to the membrane. Potentially involved in docking of synaptic vesicles at presynaptic active zones. This Caenorhabditis elegans protein is Putative syntaxin-2 (syx-2).